Reading from the N-terminus, the 427-residue chain is Tol-Pal system protein TolB (427 aa).

A signal peptide spans 1–25 (MKTFAQLRLLLAAAALALLSFSAQA).

It belongs to the TolB family. As to quaternary structure, the Tol-Pal system is composed of five core proteins: the inner membrane proteins TolA, TolQ and TolR, the periplasmic protein TolB and the outer membrane protein Pal. They form a network linking the inner and outer membranes and the peptidoglycan layer.

The protein resides in the periplasm. Part of the Tol-Pal system, which plays a role in outer membrane invagination during cell division and is important for maintaining outer membrane integrity. The chain is Tol-Pal system protein TolB from Azoarcus sp. (strain BH72).